A 292-amino-acid chain; its full sequence is uncharacterized protein (292 aa).

The helical transmembrane segment at Leu13–Tyr35 threads the bilayer.

This sequence belongs to the serine esterase family.

The protein localises to the membrane. This is an uncharacterized protein from Salmonella typhimurium (strain LT2 / SGSC1412 / ATCC 700720).